A 451-amino-acid polypeptide reads, in one-letter code: Crh-like protein 2 (451 aa).

Residues 1–21 form the signal peptide; the sequence is MQFNSLVLLAGATILSPFVQA. A GH16 domain is found at 22-241; sequence QTWTTCNPLN…FTKVPFTMYV (220 aa). Cys-27 and Cys-34 are joined by a disulfide. N-linked (GlcNAc...) asparagine glycans are attached at residues Asn-31, Asn-43, Asn-49, and Asn-59. The active-site Nucleophile is Glu-121. Residue Glu-125 is the Proton donor of the active site. Residue Glu-125 coordinates chitin. 3 N-linked (GlcNAc...) asparagine glycosylation sites follow: Asn-130, Asn-143, and Asn-165. Chitin is bound by residues Arg-206, Trp-210, and Thr-222. The N-linked (GlcNAc...) asparagine glycan is linked to Asn-273. A helical transmembrane segment spans residues 305-325; it reads VYCGGGAAVAALVSAFLFTFL. A glycan (N-linked (GlcNAc...) asparagine) is linked at Asn-366.

This sequence belongs to the glycosyl hydrolase 16 family. CRH1 subfamily. As to quaternary structure, forms homodimers as well as heterodimers with other crh protein members crh1 and crh3. Dimerization may be necessary for the transglycosylation activity.

Its subcellular location is the membrane. The enzyme catalyses Random endo-hydrolysis of N-acetyl-beta-D-glucosaminide (1-&gt;4)-beta-linkages in chitin and chitodextrins.. In terms of biological role, dual chitinase/transglycosylase that plays a role in cell wall architecture. Chitinase and transglycosylase activities are coupled. Required for the polysaccharide cross-linking at the septa and the cell wall. More specifically, transfers chitin to 1,6-beta-glucan in the cell wall. In Botryotinia fuckeliana (strain B05.10) (Noble rot fungus), this protein is Crh-like protein 2.